A 336-amino-acid chain; its full sequence is Terephthalate 1,2-dioxygenase, reductase component 2 (336 aa).

A 2Fe-2S ferredoxin-type domain is found at 3–91 (HQIHIHDSDI…DIRIHPSSFR (89 aa)). 4 residues coordinate [2Fe-2S] cluster: C37, C42, C45, and C75. One can recognise an FAD-binding FR-type domain in the interval 98–197 (RKRFTAKVYS…ELPFGSIALK (100 aa)).

Monomer. Part of a multicomponent enzyme system composed of a reductase (TphA1I or TphA1II) and a two-subunit oxygenase component (TphA2I or TphA2II and TphA3I or TphA3II). FAD is required as a cofactor. [2Fe-2S] cluster serves as cofactor.

It carries out the reaction terephthalate + NADH + O2 + H(+) = (3S,4R)-3,4-dihydroxycyclohexa-1,5-diene-1,4-dicarboxylate + NAD(+). In terms of biological role, component of the terephthalate 1,2-dioxygenase multicomponent enzyme system which catalyzes the dioxygenation of terephthalate (TER/TPA) to 1,2-dihydroxy-3,5-cyclohexadiene-1,4-dicarboxylic acid (DCD). TphA1 probably reduces TphA2A3. It can also use 2,5-dicarboxypyridine (PDC) and 1,4-napthalenedicarboxylic acid (NDC) as substrates, and preferentially uses NADPH which is the physiological electron donor. The chain is Terephthalate 1,2-dioxygenase, reductase component 2 (tphA1II) from Comamonas sp.